Consider the following 813-residue polypeptide: Kinesin-like protein KIN-8B (813 aa).

One can recognise a Kinesin motor domain in the interval 14 to 345 (TLTVAVKCRP…LKYADRAKEI (332 aa)). 104–111 (GSTGSGKT) lines the ATP pocket. The stretch at 349-391 (IQKNIGTIDTHMSDYQRMIDNLQSEVSQLKTQLAEKESQLSIK) forms a coiled coil. Disordered regions lie at residues 664-694 (GSRPASRIDTGGNHRRVSYPQTVNNSSPRMA) and 756-813 (AVST…RQHQ). Polar residues-rich tracts occupy residues 682–694 (YPQTVNNSSPRMA), 761–791 (GARNQQRVFGTSPLSGTKGVKNSSYGQNSHT), and 804–813 (KGNNTQRQHQ).

This sequence belongs to the TRAFAC class myosin-kinesin ATPase superfamily. Kinesin family. KIN-8 subfamily.

The polypeptide is Kinesin-like protein KIN-8B (Arabidopsis thaliana (Mouse-ear cress)).